An 859-amino-acid polypeptide reads, in one-letter code: Protein EFR3 homolog (859 aa).

Positions arginine 696–serine 714 are enriched in polar residues. The interval arginine 696–glycine 728 is disordered.

This sequence belongs to the EFR3 family.

The polypeptide is Protein EFR3 homolog (Caenorhabditis elegans).